We begin with the raw amino-acid sequence, 371 residues long: T-cell acute lymphocytic leukemia protein 1 (371 aa).

Residues 1–71 (MMEKRQPELC…DVPLQNSSNG (71 aa)) are disordered. Over residues 34-57 (GCKEDEESKREEGDKEGGGRFKGD) the composition is skewed to basic and acidic residues. A bHLH domain is found at 204–256 (VRRIFTNSRERWRQQNVNGAFAELRKLIPTHPPDKKLSKNEILRLAMKYISFL). The interval 263–371 (QDGGRNVSST…GRPLDGSSRR (109 aa)) is disordered. Residues 293–305 (HQDRVVGLARDDI) show a composition bias toward basic and acidic residues. A compositionally biased stretch (acidic residues) spans 321–335 (GDADGSPESFMEDQD).

In terms of tissue distribution, expressed in the main hemopoietic organs in adults, namely the kidney and the spleen. Also expressed in the liver, brain, gill and gonads.

It localises to the nucleus. Transcription factor that plays a pivotal role in hemopoietic and endothelial development. In Takifugu rubripes (Japanese pufferfish), this protein is T-cell acute lymphocytic leukemia protein 1.